Reading from the N-terminus, the 81-residue chain is Escargot/snail protein homolog (81 aa).

4 consecutive C2H2-type zinc fingers follow at residues 1–5 (HQQFH), 17–39 (FSCK…IRTH), 43–65 (CKCH…IRTH), and 71–81 (FSCQHCNRAFA).

This sequence belongs to the snail C2H2-type zinc-finger protein family.

Its subcellular location is the nucleus. The sequence is that of Escargot/snail protein homolog from Apis mellifera (Honeybee).